The primary structure comprises 341 residues: tRNA N6-adenosine threonylcarbamoyltransferase (341 aa).

Fe cation-binding residues include H111 and H115. Residues 134-138 (LVSGG), D167, G180, and N276 each bind substrate. D304 is a Fe cation binding site.

The protein belongs to the KAE1 / TsaD family. Fe(2+) serves as cofactor.

The protein resides in the cytoplasm. The enzyme catalyses L-threonylcarbamoyladenylate + adenosine(37) in tRNA = N(6)-L-threonylcarbamoyladenosine(37) in tRNA + AMP + H(+). Required for the formation of a threonylcarbamoyl group on adenosine at position 37 (t(6)A37) in tRNAs that read codons beginning with adenine. Is involved in the transfer of the threonylcarbamoyl moiety of threonylcarbamoyl-AMP (TC-AMP) to the N6 group of A37, together with TsaE and TsaB. TsaD likely plays a direct catalytic role in this reaction. The protein is tRNA N6-adenosine threonylcarbamoyltransferase of Pseudomonas fluorescens (strain Pf0-1).